A 272-amino-acid polypeptide reads, in one-letter code: Shikimate dehydrogenase (NADP(+)) (272 aa).

Residues 14-16 and Thr61 each bind shikimate; that span reads SKS. Catalysis depends on Lys65, which acts as the Proton acceptor. Glu77 is a binding site for NADP(+). The shikimate site is built by Asn86 and Asp102. NADP(+)-binding positions include 126-130, 149-154, and Met213; these read GAGGA and NRTASR. Tyr215 lines the shikimate pocket. Gly237 is an NADP(+) binding site.

The protein belongs to the shikimate dehydrogenase family. Homodimer.

The catalysed reaction is shikimate + NADP(+) = 3-dehydroshikimate + NADPH + H(+). It participates in metabolic intermediate biosynthesis; chorismate biosynthesis; chorismate from D-erythrose 4-phosphate and phosphoenolpyruvate: step 4/7. Its function is as follows. Involved in the biosynthesis of the chorismate, which leads to the biosynthesis of aromatic amino acids. Catalyzes the reversible NADPH linked reduction of 3-dehydroshikimate (DHSA) to yield shikimate (SA). The polypeptide is Shikimate dehydrogenase (NADP(+)) (Salmonella paratyphi A (strain ATCC 9150 / SARB42)).